The sequence spans 367 residues: Ganglioside-induced differentiation-associated protein 1-like 1 (367 aa).

Residues 45 to 126 (ESLVLYHWTQ…YVERTFTGEH (82 aa)) form the GST N-terminal domain. In terms of domain architecture, GST C-terminal spans 174–341 (PKYATAEIRR…RLVKRKPPSF (168 aa)).

The protein belongs to the GST superfamily.

The chain is Ganglioside-induced differentiation-associated protein 1-like 1 (GDAP1L1) from Homo sapiens (Human).